The chain runs to 133 residues: Putative biopolymer transport protein ExbD-like 2 (133 aa).

Over Met-1–Val-9 the chain is Cytoplasmic. The helical transmembrane segment at Val-10–Val-30 threads the bilayer. Over Gln-31–Asn-133 the chain is Periplasmic.

Belongs to the ExbD/TolR family.

The protein resides in the cell inner membrane. The protein is Putative biopolymer transport protein ExbD-like 2 of Helicobacter pylori (strain J99 / ATCC 700824) (Campylobacter pylori J99).